Reading from the N-terminus, the 486-residue chain is UDP-N-acetylmuramate--L-alanine ligase (486 aa).

Position 126–132 (126–132) interacts with ATP; sequence GTHGKTS.

This sequence belongs to the MurCDEF family.

Its subcellular location is the cytoplasm. It catalyses the reaction UDP-N-acetyl-alpha-D-muramate + L-alanine + ATP = UDP-N-acetyl-alpha-D-muramoyl-L-alanine + ADP + phosphate + H(+). Its pathway is cell wall biogenesis; peptidoglycan biosynthesis. Functionally, cell wall formation. The chain is UDP-N-acetylmuramate--L-alanine ligase from Buchnera aphidicola subsp. Baizongia pistaciae (strain Bp).